The sequence spans 474 residues: Nitrogenase vanadium-iron protein alpha chain (474 aa).

3 residues coordinate [8Fe-7S] cluster: cysteine 49, cysteine 75, and cysteine 138. Residues cysteine 257 and histidine 423 each contribute to the [7Fe-V-9S-C-homocitryl] cluster site.

Belongs to the NifD/NifK/NifE/NifN family. In terms of assembly, hexamer of two alpha, two beta, and two delta chains. Requires [8Fe-7S] cluster as cofactor. It depends on [7Fe-V-9S-C-homocitryl] cluster as a cofactor.

It catalyses the reaction N2 + 8 reduced [2Fe-2S]-[ferredoxin] + 16 ATP + 16 H2O = H2 + 8 oxidized [2Fe-2S]-[ferredoxin] + 2 NH4(+) + 16 ADP + 16 phosphate + 6 H(+). Functionally, this vanadium-iron protein is part of the nitrogenase complex that catalyzes the key enzymatic reactions in nitrogen fixation. This Azotobacter vinelandii protein is Nitrogenase vanadium-iron protein alpha chain (vnfD).